A 183-amino-acid polypeptide reads, in one-letter code: Adenine phosphoribosyltransferase (183 aa).

The protein belongs to the purine/pyrimidine phosphoribosyltransferase family. In terms of assembly, homodimer.

It localises to the cytoplasm. The catalysed reaction is AMP + diphosphate = 5-phospho-alpha-D-ribose 1-diphosphate + adenine. It functions in the pathway purine metabolism; AMP biosynthesis via salvage pathway; AMP from adenine: step 1/1. Functionally, catalyzes a salvage reaction resulting in the formation of AMP, that is energically less costly than de novo synthesis. The polypeptide is Adenine phosphoribosyltransferase (Escherichia fergusonii (strain ATCC 35469 / DSM 13698 / CCUG 18766 / IAM 14443 / JCM 21226 / LMG 7866 / NBRC 102419 / NCTC 12128 / CDC 0568-73)).